The chain runs to 516 residues: 2-isopropylmalate synthase (516 aa).

A Pyruvate carboxyltransferase domain is found at 5–268 (LIIFDTTLRD…DLGIDTTQIV (264 aa)). Mn(2+) is bound by residues Asp14, His202, His204, and Asn239. The regulatory domain stretch occupies residues 395 to 516 (KFVSLSQHSE…DKLNPQRADI (122 aa)).

Belongs to the alpha-IPM synthase/homocitrate synthase family. LeuA type 1 subfamily. In terms of assembly, homodimer. Mn(2+) is required as a cofactor.

The protein resides in the cytoplasm. The catalysed reaction is 3-methyl-2-oxobutanoate + acetyl-CoA + H2O = (2S)-2-isopropylmalate + CoA + H(+). It functions in the pathway amino-acid biosynthesis; L-leucine biosynthesis; L-leucine from 3-methyl-2-oxobutanoate: step 1/4. Catalyzes the condensation of the acetyl group of acetyl-CoA with 3-methyl-2-oxobutanoate (2-ketoisovalerate) to form 3-carboxy-3-hydroxy-4-methylpentanoate (2-isopropylmalate). In Paraburkholderia phymatum (strain DSM 17167 / CIP 108236 / LMG 21445 / STM815) (Burkholderia phymatum), this protein is 2-isopropylmalate synthase.